Consider the following 291-residue polypeptide: Ribose-phosphate pyrophosphokinase (291 aa).

Residues 34–36 and 93–94 each bind ATP; these read DGE and RQ. Residues His127 and Asp165 each contribute to the Mg(2+) site. Lys188 is a catalytic residue. D-ribose 5-phosphate-binding positions include Arg190, Asp216, and 220–224; that span reads STGGT.

This sequence belongs to the ribose-phosphate pyrophosphokinase family. Class III (archaeal) subfamily. Mg(2+) serves as cofactor.

The protein localises to the cytoplasm. The enzyme catalyses D-ribose 5-phosphate + ATP = 5-phospho-alpha-D-ribose 1-diphosphate + AMP + H(+). It participates in metabolic intermediate biosynthesis; 5-phospho-alpha-D-ribose 1-diphosphate biosynthesis; 5-phospho-alpha-D-ribose 1-diphosphate from D-ribose 5-phosphate (route I): step 1/1. Its function is as follows. Involved in the biosynthesis of the central metabolite phospho-alpha-D-ribosyl-1-pyrophosphate (PRPP) via the transfer of pyrophosphoryl group from ATP to 1-hydroxyl of ribose-5-phosphate (Rib-5-P). The polypeptide is Ribose-phosphate pyrophosphokinase (Sulfurisphaera tokodaii (strain DSM 16993 / JCM 10545 / NBRC 100140 / 7) (Sulfolobus tokodaii)).